The chain runs to 258 residues: Trans-aconitate 2-methyltransferase (258 aa).

Belongs to the methyltransferase superfamily. Tam family.

It localises to the cytoplasm. It catalyses the reaction trans-aconitate + S-adenosyl-L-methionine = (E)-3-(methoxycarbonyl)pent-2-enedioate + S-adenosyl-L-homocysteine. Catalyzes the S-adenosylmethionine monomethyl esterification of trans-aconitate. This Yersinia pseudotuberculosis serotype O:1b (strain IP 31758) protein is Trans-aconitate 2-methyltransferase.